The following is a 316-amino-acid chain: UDP-N-acetylenolpyruvoylglucosamine reductase (316 aa).

The FAD-binding PCMH-type domain maps to 27–225; sequence VGGKAERFYR…KTAINALLKK (199 aa). R190 is an active-site residue. The active-site Proton donor is S239. E309 is a catalytic residue.

It belongs to the MurB family. The cofactor is FAD.

Its subcellular location is the cytoplasm. It carries out the reaction UDP-N-acetyl-alpha-D-muramate + NADP(+) = UDP-N-acetyl-3-O-(1-carboxyvinyl)-alpha-D-glucosamine + NADPH + H(+). It functions in the pathway cell wall biogenesis; peptidoglycan biosynthesis. Cell wall formation. This is UDP-N-acetylenolpyruvoylglucosamine reductase from Coxiella burnetii (strain CbuK_Q154) (Coxiella burnetii (strain Q154)).